Reading from the N-terminus, the 154-residue chain is Proteinase inhibitor type-2 P303.51 (154 aa).

The N-terminal stretch at 1–25 (MAVHKEVNFVAYLLIVLGLLVLVSA) is a signal peptide. A run of 2 repeats spans residues 31–87 (AKAC…DPKK) and 88–147 (PKAC…DEPK). Cystine bridges form between C34-C122, C38-C118, C46-C128, C58-C95, C61-C79, C62-C91, C68-C104, and C121-C139.

The protein belongs to the protease inhibitor I20 (potato type II proteinase inhibitor) family.

The sequence is that of Proteinase inhibitor type-2 P303.51 from Solanum tuberosum (Potato).